The sequence spans 412 residues: UPF0754 membrane protein MAE_37850 (412 aa).

The next 2 helical transmembrane spans lie at 3–23 (LPTL…GYFT) and 387–407 (IVNL…IILI).

It belongs to the UPF0754 family.

It is found in the cell inner membrane. The polypeptide is UPF0754 membrane protein MAE_37850 (Microcystis aeruginosa (strain NIES-843 / IAM M-2473)).